The sequence spans 192 residues: MAP6 domain-containing protein 1 (192 aa).

3 S-palmitoyl cysteine lipidation sites follow: cysteine 5, cysteine 10, and cysteine 11. A disordered region spans residues 36–106 (LESEEPIPGG…RTKPSATPGR (71 aa)). Serine 38 carries the phosphoserine modification. Residues 43 to 58 (PGGVPSRRGPSPAGSR) are compositionally biased toward low complexity. Mn stretches follow at residues 123-136 (TTSYRQEFQAWTGV) and 158-170 (DGSPRAGFQAPEV). Phosphoserine is present on serine 160.

It belongs to the STOP family. In terms of assembly, interacts with calmodulin. Post-translationally, palmitoylated. Palmitoylation enhances association with microtubules.

It is found in the golgi apparatus. The protein localises to the cytoplasm. It localises to the cytoskeleton. In terms of biological role, may have microtubule-stabilizing activity. This Bos taurus (Bovine) protein is MAP6 domain-containing protein 1 (MAP6D1).